We begin with the raw amino-acid sequence, 506 residues long: Epstein-Barr nuclear antigen leader protein (506 aa).

Disordered stretches follow at residues Met1 to Pro470 and Phe485 to Asp506. Ser35 is modified (phosphoserine; by host).

This sequence belongs to the lymphocryptovirus EBNA-LP family. Homooligomer. Interacts with host SP100; this interaction is important for EBNA-LP coactivator activity. Interacts with host HAX1, ERR1 and HSPA2. Interacts with host PRKDC and AKAP8L; these interactions modulate the coactivator function of EBNA-LP. Phosphorylated by the cellular protein kinase cdc2.

It localises to the host nucleus. Its function is as follows. Plays an important role in the establishment of B-cell immortalization by acting as an EBNA2 coactivator. This transcriptional activation preferentially enhances the expression of the major viral protein LMP1. The interaction between EBNA-LP and host SP100 correlates with coactivation of EBNA2 and the relocalization of SP100 from PML nuclear bodies into nucleoplasm. This Epstein-Barr virus (strain B95-8) (HHV-4) protein is Epstein-Barr nuclear antigen leader protein (EBNA-LP).